The chain runs to 421 residues: Na(+)/H(+) antiporter NhaA 1 (421 aa).

11 consecutive transmembrane segments (helical) span residues 48-68 (SSGL…NSPW), 93-113 (LYWW…GLEI), 129-149 (SLAL…YTLV), 157-177 (AGWG…LALL), 187-207 (VLLA…IALF), 215-235 (LALG…AAGV), 253-273 (LASG…IPLG), 299-319 (FLIL…GGSL), 326-346 (VVLG…WLAV), 364-384 (GLGL…GLAF), and 392-412 (AAKL…ITVL).

The protein belongs to the NhaA Na(+)/H(+) (TC 2.A.33) antiporter family.

It is found in the cell membrane. The catalysed reaction is Na(+)(in) + 2 H(+)(out) = Na(+)(out) + 2 H(+)(in). Its function is as follows. Na(+)/H(+) antiporter that extrudes sodium in exchange for external protons. This chain is Na(+)/H(+) antiporter NhaA 1, found in Deinococcus geothermalis (strain DSM 11300 / CIP 105573 / AG-3a).